The following is a 396-amino-acid chain: S-arrestin (396 aa).

The protein belongs to the arrestin family.

Functionally, arrestin is one of the major proteins of the ros (retinal rod outer segments); it binds to photoactivated-phosphorylated rhodopsin, thereby apparently preventing the transducin-mediated activation of phosphodiesterase. The polypeptide is S-arrestin (Lithobates pipiens (Northern leopard frog)).